Here is a 427-residue protein sequence, read N- to C-terminus: Endothelin-1 receptor (427 aa).

The first 20 residues, 1 to 20, serve as a signal peptide directing secretion; sequence METFWLRVSFWVALVGGVIS. Residues 21–80 are Extracellular-facing; the sequence is DNPESYSTNLSIHVDSVTTFRGTELSFVVTTHQPTNLALPSNGSMHNYCPQQTKITSAFK. Residues Asn-29 and Asn-62 are each glycosylated (N-linked (GlcNAc...) asparagine). A helical membrane pass occupies residues 81–102; the sequence is YINTVISCTIFIVGMVGNATLL. Residues 103 to 112 are Cytoplasmic-facing; it reads RIIYQNKCMR. Residues 113–132 traverse the membrane as a helical segment; sequence NGPNALIASLALGDLIYVVI. Residues 133–159 lie on the Extracellular side of the membrane; that stretch reads DLPINVFKLLAGRWPFEQNDFGVFLCK. An intrachain disulfide couples Cys-158 to Cys-239. Residues 160–181 traverse the membrane as a helical segment; that stretch reads LFPFLQKSSVGITVLNLCALSV. Residues 182–205 are Cytoplasmic-facing; the sequence is DRYRAVASWSRVQGIGIPLVTAIE. Residues 206 to 229 form a helical membrane-spanning segment; sequence IVSIWILSFILAIPEAIGFVMVPF. The Extracellular portion of the chain corresponds to 230–256; it reads EYKGAQHRTCMLNATSKFMEFYQDVKD. Residues 257-278 traverse the membrane as a helical segment; that stretch reads WWLFGFYFCMPLVCTAIFYTLM. Residues 279 to 306 lie on the Cytoplasmic side of the membrane; sequence TCEMLNRRNGSLRIALSEHLKQRREVAK. The helical transmembrane segment at 307–328 threads the bilayer; that stretch reads TVFCLVVIFALCWFPLHLSRIL. Residues 329 to 347 are Extracellular-facing; the sequence is KKTVYDEMDTNRCELLSFL. The helical transmembrane segment at 348 to 372 threads the bilayer; the sequence is LLMDYIGINLATMNSCINPIALYFV. Over 373–427 the chain is Cytoplasmic; that stretch reads SKKFKNCFQSCLCCCCYQSKSLMTSVPMNGTSIQWKNPEQNNHNTERSSHKDSIN. A compositionally biased stretch (polar residues) spans 405 to 415; the sequence is IQWKNPEQNNH. Residues 405–427 form a disordered region; that stretch reads IQWKNPEQNNHNTERSSHKDSIN. A compositionally biased stretch (basic and acidic residues) spans 416–427; that stretch reads NTERSSHKDSIN. Phosphoserine is present on Ser-425.

It belongs to the G-protein coupled receptor 1 family. Endothelin receptor subfamily. EDNRA sub-subfamily. As to quaternary structure, interacts with HDAC7 and KAT5.

The protein localises to the cell membrane. Receptor for endothelin-1. Mediates its action by association with G proteins that activate a phosphatidylinositol-calcium second messenger system. The rank order of binding affinities for ET-A is: ET1 &gt; ET2 &gt;&gt; ET3. The sequence is that of Endothelin-1 receptor from Ovis aries (Sheep).